The chain runs to 544 residues: Cytochrome P450 monooxygenase tenB (544 aa).

The helical transmembrane segment at L13–W33 threads the bilayer. A compositionally biased stretch (basic and acidic residues) spans F438–K448. Residues F438 to D467 form a disordered region. Residue C486 participates in heme binding.

The protein belongs to the cytochrome P450 family. The cofactor is heme.

Its subcellular location is the membrane. It functions in the pathway secondary metabolite biosynthesis. Functionally, cytochrome P450 monooxygenase; part of the gene cluster that mediates the biosynthesis of tenellin-type 2-pyridones, iron-chelating compounds involved in iron stress tolerance, competition with the natural competitor fungus Metarhizium robertsii and insect hosts infection. TenB catalyzes the selective N-hydroxylation of the 2-pyridone nitrogen of yield tellinin and 15-hydroxytellenin (15-HT), respectively. The pathway begins with the assembly of the polyketide-amino acid backbone by the hybrid PKS-NRPS tenS with the help of the enoyl reductase tenC. These enzymes catalyze the synthesis of the pyrrolidine-2-dione intermediates pretellinin A, 11-hydropretellenin A, 12-hydropretellenin A, 13-hydropretellenin A, 14-hydropretellenin A, 12-oxopretellenin A and prototellinin D. The cytochrome P450 monooxygenase tenA then catalyzes an oxidative ring expansion of pretenellin A and 14-hydropretellenin A to form the 2-pyridone core, leading to pretenellin B and pyridovericin, respectively. The cytochrome P450 monooxygenase tenB is then required for the selective N-hydroxylation of the 2-pyridone nitrogen of yield tellinin and 15-hydroxytellenin (15-HT), respectively. The UDP-glucosyltransferase GT1 and the methyltransferase MT1, located outside the tenS gene cluster, contribute to the stepwise glycosylation and methylation of 15-HT to obtain the glycoside pyridovericin-N-O-(4-O-methyl-beta-D-glucopyranoside) (PMGP). Additional related compounds such as 1-O-methyl-15-HT, (8Z)-1-O-methyl-15-HT, and O-methyltenellin A are also produced but the enzymes involved in their biosynthesis have still to be determined. In Beauveria bassiana (strain ARSEF 2860) (White muscardine disease fungus), this protein is Cytochrome P450 monooxygenase tenB.